The chain runs to 1053 residues: Serine/threonine-protein phosphatase 6 regulatory ankyrin repeat subunit A (1053 aa).

27 ANK repeats span residues 40–69, 73–102, 106–135, 139–168, 172–201, 205–234, 238–267, 271–301, 305–334, 338–367, 371–400, 404–433, 437–466, 470–500, 504–534, 549–578, 582–611, 616–645, 652–681, 685–714, 718–747, 755–786, 788–817, 822–851, 855–885, 889–918, and 925–954; these read EKRT…RVNA, KWLT…DVNA, NWQT…NVNV, AGRT…NINA, KDRR…EVTC, KSYT…DMNE, YGNT…NVNQ, KGFT…DVNM, DGKT…VIDC, NGNT…DTAK, HGMF…DIDT, FGRT…DFNK, FGRS…SVND, RGCT…NPGI, QGYN…DVLM, ATIS…DLDV, SGRT…SILV, LKRT…PQNA, NGQT…NVDA, WGRT…KCLL, RGRT…SVDA, HGYT…KIDG, AFSP…SIVN, KGRT…QVNS, TGKT…DLTL, SKNT…DRNL, and ALQT…SVLA. Residues Ser-1007 and Ser-1011 each carry the phosphoserine modification.

In terms of assembly, protein phosphatase 6 (PP6) holoenzyme is proposed to be a heterotrimeric complex formed by the catalytic subunit, a SAPS domain-containing subunit (PP6R) and an ankyrin repeat-domain containing regulatory subunit (ARS). Interacts with PPP1C and HNRPK. Interacts with PPP6C, PPP6R1 and PPP6R3. Post-translationally, ubiquitinated by the ECS(RAB40C) complex leading to its degradation and decreased PP6 activity. In terms of tissue distribution, widely expressed (at protein level).

It is found in the nucleus. Its subcellular location is the nucleoplasm. It localises to the cytoplasm. The protein resides in the cytosol. The protein localises to the cell projection. It is found in the lamellipodium. In terms of biological role, putative regulatory subunit of protein phosphatase 6 (PP6) that may be involved in the recognition of phosphoprotein substrates. Involved in the PP6-mediated dephosphorylation of NFKBIE opposing its degradation in response to TNF-alpha. Selectively inhibits the phosphatase activity of PPP1C. Targets PPP1C to modulate HNRPK phosphorylation. Involved in the PP6-mediated dephosphorylation of MOB1 and induced focal adhesion assembly during cell migration. The protein is Serine/threonine-protein phosphatase 6 regulatory ankyrin repeat subunit A (Ankrd28) of Mus musculus (Mouse).